We begin with the raw amino-acid sequence, 454 residues long: V-type ATP synthase subunit I 2 (454 aa).

Residues 101-121 form a disordered region; sequence EREGDAPSVPRGKSSVAHDSA. A run of 4 helical transmembrane segments spans residues 254-274, 293-313, 351-371, and 424-444; these read LLFGIMFGDLGQGLLFFVLGL, VFLSVGFSSMVMGFLTGEFFA, MAFFGFTLFLGFVINSLGLII, and ACLSWVFFVKSFWSVCASVCV.

It belongs to the V-ATPase 116 kDa subunit family.

The protein resides in the cell membrane. In terms of biological role, produces ATP from ADP in the presence of a proton gradient across the membrane. The chain is V-type ATP synthase subunit I 2 (atpI2) from Treponema pallidum (strain Nichols).